Consider the following 131-residue polypeptide: UPF0292 protein PF1724 (131 aa).

Residues 20-103 (KGVIIVEGKR…ETRRELQFIA (84 aa)) form the Toprim domain. The Mg(2+) site is built by E26, D69, and D71.

This sequence belongs to the UPF0292 family. Requires Mg(2+) as cofactor.

In Pyrococcus furiosus (strain ATCC 43587 / DSM 3638 / JCM 8422 / Vc1), this protein is UPF0292 protein PF1724.